Reading from the N-terminus, the 983-residue chain is Next to BRCA1 gene 1 protein (983 aa).

One can recognise a PB1 domain in the interval 4 to 86 (QVTLNVTFKN…NQLQMQVHEG (83 aa)). The residue at position 117 (S117) is a Phosphoserine. The segment at 126 to 149 (MKTTEEPTAEARSPVPCDTDKPQD) is disordered. The ZZ-type zinc finger occupies 214 to 266 (SWHIACSHCQKRIVGVRYQCSLCPSYNICEDCEAGPYSHDTNHILLKFRRPVV). 8 residues coordinate Zn(2+): C219, C222, C233, C236, C242, C245, H252, and H256. ATG8 family proteins-binding regions lie at residues 544-638 (ASER…PASV) and 745-756 (ASSEDYIIILPE). T588 bears the Phosphothreonine mark. 2 positions are modified to phosphoserine: S592 and S598. The segment at 611–645 (EESEGAGLKASPDSTVLTKRKAETPASVEETEEDL) is disordered. Residues 768 to 813 (MYSSALSQPGLERGAEGEPGIESGQEPAEARERLPERESQPKEQSI) form a disordered region. A compositionally biased stretch (basic and acidic residues) spans 795 to 808 (AEARERLPERESQP). S855 carries the post-translational modification Phosphoserine. A disordered region spans residues 867-894 (DHVRGEPRGSTGLANSRQKSCDHSRHHN). In terms of domain architecture, UBA spans 930-974 (SEDQTAALMAHLFEMGFCDRQLNLRLLRKHNHNILQVVTELLQVN).

As to quaternary structure, homooligomer and heterooligomer. Interacts with TRIM55. Interacts with titin/TTN. Interacts with RNF29, USP8, MAP1LC3A, MAP1LC3B, MAP1LC3C, GABARAP, GABARAPL1 and GABARAPL2. Binds to ubiquitin and ubiquitinated proteins. Interacts with SQSTM1. Interacts with TAX1BP1. Interacts with IRF3; this interaction mediates autophagic degradation of IRF3. Interacts with IL12A and IL12B. Phosphorylated by GSK3A; this phosphorylation inhibits NBR1 involvement in the formation of ubiquitinated protein aggregates.

Its subcellular location is the cytoplasm. It localises to the cytoplasmic vesicle. The protein localises to the autophagosome. It is found in the lysosome. The protein resides in the myofibril. Its subcellular location is the sarcomere. It localises to the m line. Functionally, ubiquitin-binding autophagy adapter that participates in different processes including host defense or intracellular homeostasis. Possesses a double function during the selective autophagy by acting as a shuttle bringing ubiquitinated proteins to autophagosomes and also by participating in the formation of protein aggregates. Plays a role in the regulation of the innate immune response by modulating type I interferon production and targeting ubiquitinated IRF3 for autophagic degradation. In response to oxidative stress, promotes an increase in SQSTM1 levels, phosphorylation, and body formation by preventing its autophagic degradation. In turn, activates the KEAP1-NRF2/NFE2L2 antioxidant pathway. Also plays non-autophagy role by mediating the shuttle of IL-12 to late endosome for subsequent secretion. The chain is Next to BRCA1 gene 1 protein (Nbr1) from Rattus norvegicus (Rat).